A 291-amino-acid polypeptide reads, in one-letter code: Polyamine aminopropyltransferase (291 aa).

The PABS domain occupies 5 to 245 (PGPISLIEPL…YAVNYILGSL (241 aa)). Gln36 provides a ligand contact to S-methyl-5'-thioadenosine. His67 and Glu91 together coordinate spermidine. S-methyl-5'-thioadenosine-binding positions include Asp111 and 143–144 (DG). The active-site Proton acceptor is Asp164.

Belongs to the spermidine/spermine synthase family. As to quaternary structure, homodimer or homotetramer.

The protein localises to the cytoplasm. The catalysed reaction is S-adenosyl 3-(methylsulfanyl)propylamine + putrescine = S-methyl-5'-thioadenosine + spermidine + H(+). The protein operates within amine and polyamine biosynthesis; spermidine biosynthesis; spermidine from putrescine: step 1/1. Catalyzes the irreversible transfer of a propylamine group from the amino donor S-adenosylmethioninamine (decarboxy-AdoMet) to putrescine (1,4-diaminobutane) to yield spermidine. In Pyrobaculum neutrophilum (strain DSM 2338 / JCM 9278 / NBRC 100436 / V24Sta) (Thermoproteus neutrophilus), this protein is Polyamine aminopropyltransferase.